We begin with the raw amino-acid sequence, 361 residues long: Putative agmatine deiminase (361 aa).

Catalysis depends on Cys-354, which acts as the Amidino-cysteine intermediate.

Belongs to the agmatine deiminase family.

It carries out the reaction agmatine + H2O = N-carbamoylputrescine + NH4(+). The chain is Putative agmatine deiminase from Streptococcus pneumoniae (strain ATCC BAA-255 / R6).